Here is a 452-residue protein sequence, read N- to C-terminus: Chromosomal replication initiator protein DnaA (452 aa).

The interval 1 to 85 (MSTTAWQKCL…IEVGSKPVEA (85 aa)) is domain I, interacts with DnaA modulators. The tract at residues 85 to 115 (AVDTPAETIVTSSSTAPLKSAPKKAVDYKSS) is domain II. Residues 116–332 (HLNKKFVFDS…GALRRVIANA (217 aa)) form a domain III, AAA+ region region. Glycine 160, glycine 162, lysine 163, and threonine 164 together coordinate ATP. The domain IV, binds dsDNA stretch occupies residues 333 to 452 (HFTGKPITIE…YKNLMRILSS (120 aa)).

It belongs to the DnaA family. In terms of assembly, oligomerizes as a right-handed, spiral filament on DNA at oriC.

The protein localises to the cytoplasm. Functionally, plays an essential role in the initiation and regulation of chromosomal replication. ATP-DnaA binds to the origin of replication (oriC) to initiate formation of the DNA replication initiation complex once per cell cycle. Binds the DnaA box (a 9 base pair repeat at the origin) and separates the double-stranded (ds)DNA. Forms a right-handed helical filament on oriC DNA; dsDNA binds to the exterior of the filament while single-stranded (ss)DNA is stabiized in the filament's interior. The ATP-DnaA-oriC complex binds and stabilizes one strand of the AT-rich DNA unwinding element (DUE), permitting loading of DNA polymerase. After initiation quickly degrades to an ADP-DnaA complex that is not apt for DNA replication. Binds acidic phospholipids. This Legionella pneumophila (strain Paris) protein is Chromosomal replication initiator protein DnaA.